Consider the following 367-residue polypeptide: Alanine racemase (367 aa).

Lysine 40 (proton acceptor; specific for D-alanine) is an active-site residue. An N6-(pyridoxal phosphate)lysine modification is found at lysine 40. Arginine 136 is a substrate binding site. Residue tyrosine 263 is the Proton acceptor; specific for L-alanine of the active site. Methionine 310 lines the substrate pocket.

It belongs to the alanine racemase family. The cofactor is pyridoxal 5'-phosphate.

It catalyses the reaction L-alanine = D-alanine. The protein operates within amino-acid biosynthesis; D-alanine biosynthesis; D-alanine from L-alanine: step 1/1. Its function is as follows. Catalyzes the interconversion of L-alanine and D-alanine. May also act on other amino acids. The polypeptide is Alanine racemase (alr) (Lactococcus lactis subsp. lactis (strain IL1403) (Streptococcus lactis)).